Here is an 81-residue protein sequence, read N- to C-terminus: Photosystem I iron-sulfur center (81 aa).

2 4Fe-4S ferredoxin-type domains span residues 2-31 (SHAV…MVPW) and 39-68 (IASS…IRVY). [4Fe-4S] cluster-binding residues include C11, C14, C17, C21, C48, C51, C54, and C58.

In terms of assembly, the cyanobacterial PSI reaction center is composed of one copy each of PsaA,B,C,D,E,F,I,J,K,L,M and X, and forms trimeric complexes. [4Fe-4S] cluster is required as a cofactor.

It is found in the cellular thylakoid membrane. The enzyme catalyses reduced [plastocyanin] + hnu + oxidized [2Fe-2S]-[ferredoxin] = oxidized [plastocyanin] + reduced [2Fe-2S]-[ferredoxin]. In terms of biological role, apoprotein for the two 4Fe-4S centers FA and FB of photosystem I (PSI); essential for photochemical activity. FB is the terminal electron acceptor of PSI, donating electrons to ferredoxin. The C-terminus interacts with PsaA/B/D and helps assemble the protein into the PSI complex. Required for binding of PsaD and PsaE to PSI. PSI is a plastocyanin/cytochrome c6-ferredoxin oxidoreductase, converting photonic excitation into a charge separation, which transfers an electron from the donor P700 chlorophyll pair to the spectroscopically characterized acceptors A0, A1, FX, FA and FB in turn. The chain is Photosystem I iron-sulfur center from Prochlorococcus marinus (strain MIT 9312).